A 384-amino-acid chain; its full sequence is Carbamoyl phosphate synthase small chain (384 aa).

A CPSase region spans residues 1-192 (MMKRIPAILV…LTDNIRVHRV (192 aa)). L-glutamine contacts are provided by Ser51, Gly244, and Gly246. The region spanning 196 to 382 (KVIVIDFGVK…IEIMTKSKNK (187 aa)) is the Glutamine amidotransferase type-1 domain. Cys272 functions as the Nucleophile in the catalytic mechanism. Positions 273, 276, 312, 314, and 315 each coordinate L-glutamine. Catalysis depends on residues His355 and Glu357.

This sequence belongs to the CarA family. As to quaternary structure, composed of two chains; the small (or glutamine) chain promotes the hydrolysis of glutamine to ammonia, which is used by the large (or ammonia) chain to synthesize carbamoyl phosphate. Tetramer of heterodimers (alpha,beta)4.

Its subcellular location is the plastid. It is found in the chloroplast. The catalysed reaction is hydrogencarbonate + L-glutamine + 2 ATP + H2O = carbamoyl phosphate + L-glutamate + 2 ADP + phosphate + 2 H(+). It carries out the reaction L-glutamine + H2O = L-glutamate + NH4(+). It participates in amino-acid biosynthesis; L-arginine biosynthesis; carbamoyl phosphate from bicarbonate: step 1/1. It functions in the pathway pyrimidine metabolism; UMP biosynthesis via de novo pathway; (S)-dihydroorotate from bicarbonate: step 1/3. Small subunit of the glutamine-dependent carbamoyl phosphate synthetase (CPSase). CPSase catalyzes the formation of carbamoyl phosphate from the ammonia moiety of glutamine, carbonate, and phosphate donated by ATP, constituting the first step of 2 biosynthetic pathways, one leading to arginine and/or urea and the other to pyrimidine nucleotides. The small subunit (glutamine amidotransferase) binds and cleaves glutamine to supply the large subunit with the substrate ammonia. The sequence is that of Carbamoyl phosphate synthase small chain from Pyropia yezoensis (Susabi-nori).